A 63-amino-acid chain; its full sequence is Cysteine-rich venom protein 3 (63 aa).

The N-terminal stretch at 1-25 (MRKPITLILVVALALVLLATSEVSA) is a signal peptide. 3 disulfides stabilise this stretch: Cys29–Cys43, Cys36–Cys48, and Cys42–Cys58.

As to expression, expressed by the venom gland.

It localises to the secreted. The sequence is that of Cysteine-rich venom protein 3 from Pimpla hypochondriaca (Parasitoid wasp).